A 1316-amino-acid polypeptide reads, in one-letter code: DNA-directed RNA polymerase subunit beta' (1316 aa).

Residues cysteine 60, cysteine 62, cysteine 75, and cysteine 78 each coordinate Zn(2+). Aspartate 535, aspartate 537, and aspartate 539 together coordinate Mg(2+). Zn(2+) contacts are provided by cysteine 891, cysteine 968, cysteine 975, and cysteine 978.

It belongs to the RNA polymerase beta' chain family. As to quaternary structure, the RNAP catalytic core consists of 2 alpha, 1 beta, 1 beta' and 1 omega subunit. When a sigma factor is associated with the core the holoenzyme is formed, which can initiate transcription. Mg(2+) serves as cofactor. The cofactor is Zn(2+).

It catalyses the reaction RNA(n) + a ribonucleoside 5'-triphosphate = RNA(n+1) + diphosphate. In terms of biological role, DNA-dependent RNA polymerase catalyzes the transcription of DNA into RNA using the four ribonucleoside triphosphates as substrates. This is DNA-directed RNA polymerase subunit beta' from Mycobacterium bovis (strain BCG / Pasteur 1173P2).